The sequence spans 374 residues: DNA integrity scanning protein DisA (374 aa).

A DAC domain is found at 20–158 (EALMRASLSA…DGERRVLEES (139 aa)). Residues glycine 87, leucine 105, and 118-122 (TRHRT) each bind ATP.

It belongs to the DisA family. Homooctamer. Mg(2+) serves as cofactor.

It catalyses the reaction 2 ATP = 3',3'-c-di-AMP + 2 diphosphate. Functionally, participates in a DNA-damage check-point that is active prior to asymmetric division when DNA is damaged. DisA forms globular foci that rapidly scan along the chromosomes during sporulation, searching for lesions. When a lesion is present, DisA pauses at the lesion site. This triggers a cellular response that culminates in a temporary block in sporulation initiation. In terms of biological role, also has diadenylate cyclase activity, catalyzing the condensation of 2 ATP molecules into cyclic di-AMP (c-di-AMP). c-di-AMP acts as a signaling molecule that couples DNA integrity with progression of sporulation. The rise in c-di-AMP level generated by DisA while scanning the chromosome, operates as a positive signal that advances sporulation; upon encountering a lesion, the DisA focus arrests at the damaged site and halts c-di-AMP synthesis. This is DNA integrity scanning protein DisA from Streptomyces griseus subsp. griseus (strain JCM 4626 / CBS 651.72 / NBRC 13350 / KCC S-0626 / ISP 5235).